Consider the following 904-residue polypeptide: Phosphoenolpyruvate carboxylase (904 aa).

The tract at residues 52 to 71 (ISRRESDAPPSTLSEQLTGR) is disordered. Polar residues predominate over residues 60 to 70 (PPSTLSEQLTG). Catalysis depends on residues His151 and Lys570.

The protein belongs to the PEPCase type 1 family. Mg(2+) is required as a cofactor.

The enzyme catalyses oxaloacetate + phosphate = phosphoenolpyruvate + hydrogencarbonate. Functionally, forms oxaloacetate, a four-carbon dicarboxylic acid source for the tricarboxylic acid cycle. The polypeptide is Phosphoenolpyruvate carboxylase (Xanthomonas euvesicatoria pv. vesicatoria (strain 85-10) (Xanthomonas campestris pv. vesicatoria)).